The chain runs to 697 residues: Protein FAM13A (697 aa).

3 disordered regions span residues 1–21 (MACEIMPLQSSQEDERPMSPF), 52–112 (HLFD…GFSN), and 133–229 (YIGE…QQES). Residue Ser-19 is modified to Phosphoserine. A compositionally biased stretch (low complexity) spans 58-78 (SSGGQSSEDSESGASSSSSTS). Basic and acidic residues predominate over residues 86-103 (AKEQDESRHSRDVGRLNK). Residues 146–169 (SSRLSELNENQDGLVNMENLNPTP) show a composition bias toward polar residues. A compositionally biased stretch (basic and acidic residues) spans 170-197 (SHERTGSDHVELISDGSKENEKDGRQSQ). 2 positions are modified to phosphoserine: Ser-271 and Ser-291. Disordered regions lie at residues 307–338 (TEMPPSPPNSHPFMRRRSSSLGSYEDEQEDLT) and 398–433 (LKISEEDLPPRMRQRSNTLPKSFGSQLEKEDEKKQE). Residues 398–407 (LKISEEDLPP) show a composition bias toward basic and acidic residues. Ser-401 is modified (phosphoserine). The segment covering 412 to 422 (RSNTLPKSFGS) has biased composition (polar residues). Over residues 424 to 433 (LEKEDEKKQE) the composition is skewed to basic and acidic residues.

This sequence belongs to the FAM13 family.

This chain is Protein FAM13A (FAM13A), found in Bos taurus (Bovine).